Consider the following 466-residue polypeptide: Transcription factor SOX-10 (466 aa).

5 disordered regions span residues 1–67 (MAEE…DDDK), 160–200 (LRMQ…QGGA), 213–275 (DHRH…DFGN), 344–375 (TVSPPGVDAKAQVKTETTGPQGPPHYTDQPST), and 433–466 (RPLYTAISDPSPSGPQSHSPTHWEQPVYTTLSRP). The span at 23–32 (LSPGSAPSLG) shows a compositional bias: low complexity. Ser24 is modified (phosphoserine). The segment at 62–102 (EADDDKFPVCIREAVSQVLSGYDWTLVPMPVRVNGASKSKP) is dimerization (DIM). Residues 104 to 172 (VKRPMNAFMV…QHKKDHPDYK (69 aa)) constitute a DNA-binding region (HMG box). A compositionally biased stretch (basic and acidic residues) spans 160-173 (LRMQHKKDHPDYKY). The span at 183 to 200 (AAQGEAECPGGEAEQGGA) shows a compositional bias: low complexity. Residues 228-310 (PEHPSGQSHG…LPPNGHPGHV (83 aa)) form a transactivation domain (TAM) region. The span at 254-271 (ADPKRDGRSLGEGGKPHI) shows a compositional bias: basic and acidic residues. The interval 353–466 (KAQVKTETTG…QPVYTTLSRP (114 aa)) is transactivation domain (TAC). The span at 440-466 (SDPSPSGPQSHSPTHWEQPVYTTLSRP) shows a compositional bias: polar residues.

Monomer. Interacts with Armcx3 at the mitochondrial outer membrane surface. Interacts with PAX3. In terms of tissue distribution, expressed in oligodendroglia of the spinal tube (at protein level).

It localises to the cytoplasm. It is found in the nucleus. The protein localises to the mitochondrion outer membrane. Its function is as follows. Transcription factor that plays a central role in developing and mature glia. Specifically activates expression of myelin genes, during oligodendrocyte (OL) maturation, such as DUSP15 and MYRF, thereby playing a central role in oligodendrocyte maturation and CNS myelination. Once induced, MYRF cooperates with SOX10 to implement the myelination program. Transcriptional activator of MITF, acting synergistically with PAX3. Transcriptional activator of MBP, via binding to the gene promoter. This is Transcription factor SOX-10 (Sox10) from Mus musculus (Mouse).